A 192-amino-acid polypeptide reads, in one-letter code: Bifunctional protein PyrR (192 aa).

Substrate-binding positions include 49 to 50 (SG), Arg-90, 111 to 119 (DDVLFSGRT), Arg-144, and Val-168. A PRPP-binding motif is present at residues 107–119 (VILVDDVLFSGRT).

Belongs to the purine/pyrimidine phosphoribosyltransferase family. PyrR subfamily.

The enzyme catalyses UMP + diphosphate = 5-phospho-alpha-D-ribose 1-diphosphate + uracil. Functionally, regulates the transcription of the pyrimidine nucleotide (pyr) operon in response to exogenous pyrimidines. In terms of biological role, also displays a weak uracil phosphoribosyltransferase activity which is not physiologically significant. This is Bifunctional protein PyrR from Corynebacterium glutamicum (strain ATCC 13032 / DSM 20300 / JCM 1318 / BCRC 11384 / CCUG 27702 / LMG 3730 / NBRC 12168 / NCIMB 10025 / NRRL B-2784 / 534).